We begin with the raw amino-acid sequence, 182 residues long: Ribosome-recycling factor (182 aa).

The protein belongs to the RRF family.

It is found in the cytoplasm. Functionally, responsible for the release of ribosomes from messenger RNA at the termination of protein biosynthesis. May increase the efficiency of translation by recycling ribosomes from one round of translation to another. This chain is Ribosome-recycling factor, found in Picosynechococcus sp. (strain ATCC 27264 / PCC 7002 / PR-6) (Agmenellum quadruplicatum).